A 456-amino-acid chain; its full sequence is Histidinol dehydrogenase homolog (456 aa).

Position 279 (His-279) interacts with Zn(2+). Catalysis depends on proton acceptor residues Glu-347 and His-348. A Zn(2+)-binding site is contributed by His-440.

The protein belongs to the histidinol dehydrogenase family. It depends on Zn(2+) as a cofactor.

The protein is Histidinol dehydrogenase homolog of Rhizobium meliloti (strain 1021) (Ensifer meliloti).